The chain runs to 155 residues: Ribosomal RNA large subunit methyltransferase H (155 aa).

S-adenosyl-L-methionine contacts are provided by residues Leu73, Gly104, and 123 to 128; that span reads LSPLTL.

Belongs to the RNA methyltransferase RlmH family. As to quaternary structure, homodimer.

It localises to the cytoplasm. It carries out the reaction pseudouridine(1915) in 23S rRNA + S-adenosyl-L-methionine = N(3)-methylpseudouridine(1915) in 23S rRNA + S-adenosyl-L-homocysteine + H(+). Its function is as follows. Specifically methylates the pseudouridine at position 1915 (m3Psi1915) in 23S rRNA. The protein is Ribosomal RNA large subunit methyltransferase H of Ectopseudomonas mendocina (strain ymp) (Pseudomonas mendocina).